A 305-amino-acid polypeptide reads, in one-letter code: Peroxisome biogenesis factor 2 (305 aa).

Residues 1-15 (MAAREESTQSANRVL) are Peroxisomal matrix-facing. Residues 16–42 (RISQLDALELNKALEQLVWSQFTQCFH) form a helical membrane-spanning segment. Residues 43-48 (GFKPGL) are Cytoplasmic-facing. The chain crosses the membrane as a helical span at residues 49 to 74 (LARFEPEVKAFLWLFLWRFTIYSKNA). The Peroxisomal matrix portion of the chain corresponds to 75–98 (TVGQSVLNIQYKNDSSPNPVYQPP). A helical membrane pass occupies residues 99–125 (SKNQKLLYAVCTIGGRWLEERCYDLFR). At 126 to 133 (NRHLASFG) the chain is on the cytoplasmic side. The chain crosses the membrane as a helical span at residues 134 to 160 (KAKQCMNFVVGLLKLGELMNFLIFLQK). The Peroxisomal matrix segment spans residues 161 to 187 (GKFATLTERLLGIHSVFCKPQSMREVG). The chain crosses the membrane as a helical span at residues 188 to 211 (FEYMNRELLWHGFAEFLVFLLPLI). At 212–305 (NIQKLKAKLS…GIEMSEVNAL (94 aa)) the chain is on the cytoplasmic side. Zn(2+)-binding residues include cysteine 244, cysteine 247, cysteine 259, histidine 261, cysteine 264, cysteine 267, cysteine 280, and cysteine 283. The RING-type zinc finger occupies 244–284 (CALCGEWPTMPHTIGCEHVFCYYCVKSSFLFDMYFTCPKCG).

Belongs to the pex2/pex10/pex12 family. In terms of assembly, component of the PEX2-PEX10-PEX12 retrotranslocation channel, composed of PEX2, PEX10 and PEX12. In terms of processing, forms intramolecular and intermolecular disulfide bonds in response to reactive oxygen species (ROS), promoting higher stability.

The protein resides in the peroxisome membrane. It catalyses the reaction [E2 ubiquitin-conjugating enzyme]-S-ubiquitinyl-L-cysteine + [acceptor protein]-L-cysteine = [E2 ubiquitin-conjugating enzyme]-L-cysteine + [acceptor protein]-S-ubiquitinyl-L-cysteine.. It carries out the reaction S-ubiquitinyl-[E2 ubiquitin-conjugating enzyme]-L-cysteine + [acceptor protein]-L-lysine = [E2 ubiquitin-conjugating enzyme]-L-cysteine + N(6)-ubiquitinyl-[acceptor protein]-L-lysine.. It participates in protein modification; protein ubiquitination. Functionally, E3 ubiquitin-protein ligase component of a retrotranslocation channel required for peroxisome organization by mediating export of the PEX5 receptor from peroxisomes to the cytosol, thereby promoting PEX5 recycling. The retrotranslocation channel is composed of PEX2, PEX10 and PEX12; each subunit contributing transmembrane segments that coassemble into an open channel that specifically allows the passage of PEX5 through the peroxisomal membrane. PEX2 also regulates peroxisome organization by acting as a E3 ubiquitin-protein ligase. PEX2 ubiquitinates PEX5 during its passage through the retrotranslocation channel: catalyzes monoubiquitination of PEX5 at 'Cys-11', a modification that acts as a signal for PEX5 extraction into the cytosol. Required for pexophagy in response to starvation by mediating ubiquitination of peroxisomal proteins, such as PEX5 and ABCD3/PMP70. Also involved in the response to reactive oxygen species (ROS) by mediating 'Lys-48'-linked polyubiquitination and subsequent degradation of PNPLA2/ATGL, thereby regulating lipolysis. This is Peroxisome biogenesis factor 2 (Pex2) from Rattus norvegicus (Rat).